Reading from the N-terminus, the 181-residue chain is Crustacyanin-A1 subunit (181 aa).

Intrachain disulfides connect cysteine 12–cysteine 121, cysteine 51–cysteine 173, and cysteine 117–cysteine 150.

This sequence belongs to the calycin superfamily. Lipocalin family. As to quaternary structure, oligomer; Can form dimers (beta-crustacyanin); or complexes of 16 subunits (alpha-crustacyanin). There are five types of subunits: A1, A2, A3, C1 and C2. As to expression, found in the carapace.

The protein resides in the secreted. The protein localises to the extracellular space. In terms of biological role, binds the carotenoid astaxanthin (AXT) which provides the blue coloration to the carapace of the lobster. The polypeptide is Crustacyanin-A1 subunit (Homarus gammarus (European lobster)).